A 294-amino-acid polypeptide reads, in one-letter code: Tryptophan 2,3-dioxygenase 1 (294 aa).

The interval 1–20 is disordered; the sequence is MSEPIQPTRPAASGCPMHGA. Substrate-binding positions include 63–67, Y125, and R129; that span reads FIVQH. Position 252 (H252) interacts with heme. Residue T266 participates in substrate binding.

It belongs to the tryptophan 2,3-dioxygenase family. In terms of assembly, homotetramer. The cofactor is heme.

The catalysed reaction is L-tryptophan + O2 = N-formyl-L-kynurenine. It participates in amino-acid degradation; L-tryptophan degradation via kynurenine pathway; L-kynurenine from L-tryptophan: step 1/2. Its function is as follows. Heme-dependent dioxygenase that catalyzes the oxidative cleavage of the L-tryptophan (L-Trp) pyrrole ring and converts L-tryptophan to N-formyl-L-kynurenine. Catalyzes the oxidative cleavage of the indole moiety. This is Tryptophan 2,3-dioxygenase 1 from Ralstonia nicotianae (strain ATCC BAA-1114 / GMI1000) (Ralstonia solanacearum).